A 483-amino-acid chain; its full sequence is MPEDSTAIDYVMEKASGPHFSGLRLDGLLSSPSKSSVSSPSHFRLSNSSFSATDDPAAPHQPFVIGVTGGTASGKTTVCDMIIQQLHDHRIVLVNQDSFYRGLTSEELEHVQEYNFDHPDAFDTEQLLHCVDILKSGQPYQIPIYDFKTHQRKVDAFRQVNACDVIILEGILVFHDSRVRDLMNMKIFVDTDADVRLARRIRRDTVERGRDVDSVLEQYAKFVKPAFDDFVLPSKKYADVIIPRGGDNHVAVDLIVQHIHTKLGQHDLCKIYPNVFVIETTFQIRGMHTLIREKDISKHDFVFYSDRLIRLVVEHGLGHLPFTEKQVVTPTGSVYSGVDFCKKLCGVSVIRSGESMENALRACCKGIKIGKILIHRDGDNGMQLIYEKLPSDISERHVLLLDPVLGTGNSANQAIELLIQKGVPEAHIIFLNLISAPEGIHCVCKRFPKLKIVTSEIDQCLNEEFRVIPGLGEFGDRYFGTDE.

A chloroplast-targeting transit peptide spans 1–47 (MPEDSTAIDYVMEKASGPHFSGLRLDGLLSSPSKSSVSSPSHFRLSN). A uridine kinase region spans residues 59-264 (PHQPFVIGVT…IVQHIHTKLG (206 aa)). The uracil phosphoribosyltransferase stretch occupies residues 274-483 (NVFVIETTFQ…FGDRYFGTDE (210 aa)). GTP is bound by residues Lys-298, Arg-307, and 341–344 (CKKL). Positions 351 and 376 each coordinate 5-phospho-alpha-D-ribose 1-diphosphate. Arg-396 provides a ligand contact to GTP. Residues Asp-402, 407-410 (TGNS), and Glu-473 each bind 5-phospho-alpha-D-ribose 1-diphosphate. Uracil is bound at residue 472–474 (GEF).

This sequence in the N-terminal section; belongs to the uridine kinase family. It in the C-terminal section; belongs to the UPRTase family.

The protein resides in the plastid. It localises to the chloroplast. The catalysed reaction is cytidine + ATP = CMP + ADP + H(+). It carries out the reaction uridine + ATP = UMP + ADP + H(+). Its pathway is pyrimidine metabolism; CTP biosynthesis via salvage pathway; CTP from cytidine: step 1/3. It functions in the pathway pyrimidine metabolism; UMP biosynthesis via salvage pathway; UMP from uridine: step 1/1. In terms of biological role, involved in the pyrimidine salvage pathway. Phosphorylates uridine to uridine monophosphate (UMP). Phosphorylates cytidine to cytidine monophosphate (CMP). Does not possess uracil phosphoribosyltransferase (UPRTase) activity that catalyzes the conversion of uracil and 5-phospho-alpha-D-ribose 1-diphosphate (PRPP) to UMP and diphosphate. This is Uridine/cytidine kinase UKL1, chloroplastic from Arabidopsis thaliana (Mouse-ear cress).